A 120-amino-acid chain; its full sequence is Large ribosomal subunit protein uL18 (120 aa).

This sequence belongs to the universal ribosomal protein uL18 family. Part of the 50S ribosomal subunit; part of the 5S rRNA/L5/L18/L25 subcomplex. Contacts the 5S and 23S rRNAs.

In terms of biological role, this is one of the proteins that bind and probably mediate the attachment of the 5S RNA into the large ribosomal subunit, where it forms part of the central protuberance. The sequence is that of Large ribosomal subunit protein uL18 from Oleidesulfovibrio alaskensis (strain ATCC BAA-1058 / DSM 17464 / G20) (Desulfovibrio alaskensis).